The following is a 414-amino-acid chain: Serine hydroxymethyltransferase (414 aa).

(6S)-5,6,7,8-tetrahydrofolate is bound by residues Leu-117 and 121–123 (GHL). Lys-226 bears the N6-(pyridoxal phosphate)lysine mark. (6S)-5,6,7,8-tetrahydrofolate contacts are provided by residues Glu-241 and 349 to 351 (TPF).

Belongs to the SHMT family. As to quaternary structure, homodimer. Requires pyridoxal 5'-phosphate as cofactor.

Its subcellular location is the cytoplasm. The enzyme catalyses (6R)-5,10-methylene-5,6,7,8-tetrahydrofolate + glycine + H2O = (6S)-5,6,7,8-tetrahydrofolate + L-serine. It participates in one-carbon metabolism; tetrahydrofolate interconversion. The protein operates within amino-acid biosynthesis; glycine biosynthesis; glycine from L-serine: step 1/1. Functionally, catalyzes the reversible interconversion of serine and glycine with tetrahydrofolate (THF) serving as the one-carbon carrier. Also exhibits THF-independent aldolase activity toward beta-hydroxyamino acids, producing glycine and aldehydes, via a retro-aldol mechanism. This is Serine hydroxymethyltransferase from Methanothrix thermoacetophila (strain DSM 6194 / JCM 14653 / NBRC 101360 / PT) (Methanosaeta thermophila).